Reading from the N-terminus, the 553-residue chain is Undecaprenyl phosphate-alpha-4-amino-4-deoxy-L-arabinose arabinosyl transferase (553 aa).

A run of 12 helical transmembrane segments spans residues Leu-8 to Trp-28, Phe-81 to Leu-101, Leu-113 to Val-133, Pro-136 to Ala-156, Leu-176 to Ile-196, Leu-204 to Ile-224, Ala-255 to Leu-275, Asn-289 to Ala-309, Leu-313 to Ile-333, Val-351 to Val-371, Val-384 to Ala-404, and Ala-412 to Ile-432.

The protein belongs to the glycosyltransferase 83 family.

The protein localises to the cell inner membrane. It catalyses the reaction 4-amino-4-deoxy-alpha-L-arabinopyranosyl di-trans,octa-cis-undecaprenyl phosphate + lipid IVA = lipid IIA + di-trans,octa-cis-undecaprenyl phosphate.. Its pathway is lipopolysaccharide metabolism; 4-amino-4-deoxy-beta-L-arabinose-lipid A biosynthesis. Its function is as follows. Catalyzes the transfer of the L-Ara4N moiety of the glycolipid undecaprenyl phosphate-alpha-L-Ara4N to lipid A. The modified arabinose is attached to lipid A and is required for resistance to polymyxin and cationic antimicrobial peptides. The protein is Undecaprenyl phosphate-alpha-4-amino-4-deoxy-L-arabinose arabinosyl transferase of Erwinia tasmaniensis (strain DSM 17950 / CFBP 7177 / CIP 109463 / NCPPB 4357 / Et1/99).